The following is a 121-amino-acid chain: MDKTQSRLRRARQTRIKIAELQVARLAVHRTNTHIYAQVFSPCGTKVLASASTLEAEVRAQLADQTGKGGNVNAATLIGKRIAEKAKAAGIESVAFDRSGFRYHGRVKALADAAREAGLKF.

It belongs to the universal ribosomal protein uL18 family. In terms of assembly, part of the 50S ribosomal subunit; part of the 5S rRNA/L5/L18/L25 subcomplex. Contacts the 5S and 23S rRNAs.

Its function is as follows. This is one of the proteins that bind and probably mediate the attachment of the 5S RNA into the large ribosomal subunit, where it forms part of the central protuberance. This is Large ribosomal subunit protein uL18 from Paraburkholderia phytofirmans (strain DSM 17436 / LMG 22146 / PsJN) (Burkholderia phytofirmans).